The chain runs to 200 residues: Glycerol-3-phosphate acyltransferase (200 aa).

Transmembrane regions (helical) follow at residues 2 to 22 (FNIPAVAVSYLIGSLSFAVIV), 51 to 71 (KAAALTLLGDAAKGLVAVLLA), 84 to 104 (AIAAVALAALVGHMWPVFFGF), 114 to 134 (LGVLLALSPTTALVCALIWLV), and 158 to 178 (LFFMPHTSWIFATLAIAILVL).

Belongs to the PlsY family. Probably interacts with PlsX.

The protein resides in the cell inner membrane. It carries out the reaction an acyl phosphate + sn-glycerol 3-phosphate = a 1-acyl-sn-glycero-3-phosphate + phosphate. It participates in lipid metabolism; phospholipid metabolism. Its function is as follows. Catalyzes the transfer of an acyl group from acyl-phosphate (acyl-PO(4)) to glycerol-3-phosphate (G3P) to form lysophosphatidic acid (LPA). This enzyme utilizes acyl-phosphate as fatty acyl donor, but not acyl-CoA or acyl-ACP. The protein is Glycerol-3-phosphate acyltransferase of Neisseria meningitidis serogroup A / serotype 4A (strain DSM 15465 / Z2491).